The following is a 162-amino-acid chain: Putative pre-16S rRNA nuclease (162 aa).

It belongs to the YqgF nuclease family.

The protein localises to the cytoplasm. Its function is as follows. Could be a nuclease involved in processing of the 5'-end of pre-16S rRNA. In Brucella melitensis biotype 2 (strain ATCC 23457), this protein is Putative pre-16S rRNA nuclease.